The chain runs to 716 residues: Fatty acid oxidation complex subunit alpha (716 aa).

Positions 1–189 (MIYQSPTIQV…KVGAVDAVVA (189 aa)) are enoyl-CoA hydratase/isomerase. Asp-296 is a binding site for substrate. Residues 311–716 (KEVNNAAVLG…AANNGSYYQA (406 aa)) form a 3-hydroxyacyl-CoA dehydrogenase region. Residues Met-324, Asp-343, 400–402 (VVE), Lys-407, and Ser-429 contribute to the NAD(+) site. His-450 serves as the catalytic For 3-hydroxyacyl-CoA dehydrogenase activity. Position 453 (Asn-453) interacts with NAD(+). Substrate is bound by residues Asn-500 and Tyr-660.

This sequence in the N-terminal section; belongs to the enoyl-CoA hydratase/isomerase family. It in the C-terminal section; belongs to the 3-hydroxyacyl-CoA dehydrogenase family. As to quaternary structure, heterotetramer of two alpha chains (FadB) and two beta chains (FadA).

The enzyme catalyses a (3S)-3-hydroxyacyl-CoA + NAD(+) = a 3-oxoacyl-CoA + NADH + H(+). It catalyses the reaction a (3S)-3-hydroxyacyl-CoA = a (2E)-enoyl-CoA + H2O. It carries out the reaction a 4-saturated-(3S)-3-hydroxyacyl-CoA = a (3E)-enoyl-CoA + H2O. The catalysed reaction is (3S)-3-hydroxybutanoyl-CoA = (3R)-3-hydroxybutanoyl-CoA. The enzyme catalyses a (3Z)-enoyl-CoA = a 4-saturated (2E)-enoyl-CoA. It catalyses the reaction a (3E)-enoyl-CoA = a 4-saturated (2E)-enoyl-CoA. It participates in lipid metabolism; fatty acid beta-oxidation. Functionally, involved in the aerobic and anaerobic degradation of long-chain fatty acids via beta-oxidation cycle. Catalyzes the formation of 3-oxoacyl-CoA from enoyl-CoA via L-3-hydroxyacyl-CoA. It can also use D-3-hydroxyacyl-CoA and cis-3-enoyl-CoA as substrate. The chain is Fatty acid oxidation complex subunit alpha from Shewanella baltica (strain OS223).